The following is a 259-amino-acid chain: Glutamate 5-kinase (259 aa).

ATP is bound at residue Lys18. Positions 54, 141, and 153 each coordinate substrate. Residue 173 to 174 participates in ATP binding; that stretch reads SD.

The protein belongs to the glutamate 5-kinase family.

Its subcellular location is the cytoplasm. The catalysed reaction is L-glutamate + ATP = L-glutamyl 5-phosphate + ADP. The protein operates within amino-acid biosynthesis; L-proline biosynthesis; L-glutamate 5-semialdehyde from L-glutamate: step 1/2. Its function is as follows. Catalyzes the transfer of a phosphate group to glutamate to form L-glutamate 5-phosphate. In Clavibacter michiganensis subsp. michiganensis (strain NCPPB 382), this protein is Glutamate 5-kinase.